The primary structure comprises 545 residues: MAELTISSDEIRSAIESYTQSYTPETSIEEVGVVTDTSDGIAHVSGLPSAMANELLEFPGGVLGVALNLEDREIGAVILGEFAEIEEGQQVRRTGDVLSVPVGDKFLGRVVNPLGQPIDGLGEIEAEEQRVLELQAATVLQRQPVEEPLATGITAIDALTAIGRGQRQLIIGDRKTGKTAVCIDAILNQKANWETGDPTKQVRCIYVAIGQKGSTIAGVKAALEEHGALEYTTIVAAPASDSAGFKWLAPYTGSAIGQHWMYQGKHVLIVFDDLTKQAEAYRAISLLLRRPPGREAYPGDVFYLHSRLLERCAKLSDEMGGGSMTGLPIIETKANDISAFIPTNVISITDGQVFLESDLFNKGVRPAINVGTSVSRVGGAAQTKGMKKVAGSLRLEMAQYRELEAFSAFASDLDAASLAQLERGARWVELLKQDQYSPVPVEDQIVSIFLVDQGYYDSVPVGDIRRFNAELLEDLHRSAADAFKSIEGGKVLEGEAAEAIKAATDKFKQGFLASDGSRVVNEAAAGELGHEEVESLSVTRKHVEK.

Glycine 172 to threonine 179 provides a ligand contact to ATP.

This sequence belongs to the ATPase alpha/beta chains family. As to quaternary structure, F-type ATPases have 2 components, CF(1) - the catalytic core - and CF(0) - the membrane proton channel. CF(1) has five subunits: alpha(3), beta(3), gamma(1), delta(1), epsilon(1). CF(0) has three main subunits: a(1), b(2) and c(9-12). The alpha and beta chains form an alternating ring which encloses part of the gamma chain. CF(1) is attached to CF(0) by a central stalk formed by the gamma and epsilon chains, while a peripheral stalk is formed by the delta and b chains.

The protein localises to the cell membrane. The enzyme catalyses ATP + H2O + 4 H(+)(in) = ADP + phosphate + 5 H(+)(out). Produces ATP from ADP in the presence of a proton gradient across the membrane. The alpha chain is a regulatory subunit. In Nocardia farcinica (strain IFM 10152), this protein is ATP synthase subunit alpha.